Reading from the N-terminus, the 428-residue chain is Flotillin-2 (428 aa).

A lipid anchor (N-myristoyl glycine) is attached at G2. C4 carries S-palmitoyl cysteine; by ZDHHC5 lipidation. C19 is lipidated: S-palmitoyl cysteine. C20 carries the S-palmitoyl cysteine; by ZDHHC5 lipid modification. A Phosphoserine modification is found at S405.

It belongs to the band 7/mec-2 family. Flotillin subfamily. In terms of assembly, heterooligomeric complex of flotillin-1 and flotillin-2 and caveolin-1 and caveolin-2. Interacts with ECPAS. In terms of processing, ZDHHC5-catalyzed palmitoylation may be required for the formation of higher-order complexes and for neurite outgrowth in cultured neural stem cells.

The protein resides in the cell membrane. Its subcellular location is the membrane. The protein localises to the caveola. It is found in the endosome. In terms of biological role, may act as a scaffolding protein within caveolar membranes, functionally participating in formation of caveolae or caveolae-like vesicles. May be involved in epidermal cell adhesion and epidermal structure and function. This Bos taurus (Bovine) protein is Flotillin-2 (FLOT2).